The sequence spans 23 residues: Pseudin-4 (23 aa).

Expressed by the skin glands.

The protein resides in the secreted. Functionally, possesses antifungal activity against C.albicans and is also active against E.coli and S.aureus. The sequence is that of Pseudin-4 from Pseudis paradoxa (Paradoxical frog).